Here is a 199-residue protein sequence, read N- to C-terminus: B3 domain-containing protein Os06g0107800 (199 aa).

A disordered region spans residues 13-32 (QLQGGGGGHGGGGGGGGGER). Residues 15-29 (QGGGGGHGGGGGGGG) are compositionally biased toward gly residues. The TF-B3 DNA-binding region spans 37-141 (FEKVVTPSDV…RLFIDCRKRA (105 aa)).

The protein localises to the nucleus. This is B3 domain-containing protein Os06g0107800 from Oryza sativa subsp. japonica (Rice).